A 139-amino-acid polypeptide reads, in one-letter code: MTEKKERIDVHAYLAEFDDIPGTRVFTAQRARKGYNLNQFAMSLMKAENRERFKADESAYLDEWNLTPAAKAAVLARDYNAMIDEGGNVYFLSKLFSTDGKSFQFAAGSMTGMTQEEYAQMMIDGGRSPAGVRSIKGGY.

As to quaternary structure, composed of two subunits (alpha and beta) in a 1:1 ratio. The cofactor is Fe(2+).

The catalysed reaction is 3,4-dihydroxybenzoate + O2 = 4-carboxy-2-hydroxy-cis,cis-muconate 6-semialdehyde + H(+). Its function is as follows. Responsible for the aromatic ring fission of protocatechuate. This is Protocatechuate 4,5-dioxygenase alpha chain (ligA) from Sphingobium sp. (strain NBRC 103272 / SYK-6).